A 106-amino-acid polypeptide reads, in one-letter code: uncharacterized protein (106 aa).

Helical transmembrane passes span 3-23, 29-49, 50-70, and 82-102; these read WFLL…MKYI, KWPI…LSQA, MIVL…SIGV, and FQLS…GLRL.

The protein belongs to the drug/metabolite transporter (DMT) superfamily. Small multidrug resistance (SMR) (TC 2.A.7.1) family.

The protein resides in the cell membrane. This is an uncharacterized protein from Bacillus subtilis (strain 168).